A 105-amino-acid polypeptide reads, in one-letter code: Heat shock protein HspQ (105 aa).

Residues 84–105 (QPKLDELSASIKKQLKTPRLRN) form a disordered region. The segment covering 96 to 105 (KQLKTPRLRN) has biased composition (basic residues).

The protein belongs to the HspQ family.

The protein localises to the cytoplasm. Involved in the degradation of certain denaturated proteins, including DnaA, during heat shock stress. In Wigglesworthia glossinidia brevipalpis, this protein is Heat shock protein HspQ.